Here is a 424-residue protein sequence, read N- to C-terminus: Tyrosine--tRNA ligase (424 aa).

Tyrosine 37 is a binding site for L-tyrosine. Residues 42–51 (PTADSLHLGH) carry the 'HIGH' region motif. 2 residues coordinate L-tyrosine: tyrosine 175 and glutamine 179. The 'KMSKS' region signature appears at 235–239 (KFGKT). Lysine 238 serves as a coordination point for ATP. The 58-residue stretch at 357–414 (ADLQQALVNAELVPSRGQARTMIGSNAVAINGEKQADPEYVFTDADRLFGRYTLLRRG) folds into the S4 RNA-binding domain.

It belongs to the class-I aminoacyl-tRNA synthetase family. TyrS type 1 subfamily. In terms of assembly, homodimer.

The protein localises to the cytoplasm. It catalyses the reaction tRNA(Tyr) + L-tyrosine + ATP = L-tyrosyl-tRNA(Tyr) + AMP + diphosphate + H(+). Functionally, catalyzes the attachment of tyrosine to tRNA(Tyr) in a two-step reaction: tyrosine is first activated by ATP to form Tyr-AMP and then transferred to the acceptor end of tRNA(Tyr). The chain is Tyrosine--tRNA ligase from Yersinia pestis bv. Antiqua (strain Antiqua).